A 289-amino-acid polypeptide reads, in one-letter code: ATP synthase gamma chain (289 aa).

It belongs to the ATPase gamma chain family. In terms of assembly, F-type ATPases have 2 components, CF(1) - the catalytic core - and CF(0) - the membrane proton channel. CF(1) has five subunits: alpha(3), beta(3), gamma(1), delta(1), epsilon(1). CF(0) has three main subunits: a, b and c.

Its subcellular location is the cell membrane. Produces ATP from ADP in the presence of a proton gradient across the membrane. The gamma chain is believed to be important in regulating ATPase activity and the flow of protons through the CF(0) complex. The sequence is that of ATP synthase gamma chain from Lawsonia intracellularis (strain PHE/MN1-00).